The chain runs to 461 residues: Protein YIG1 (461 aa).

A disordered region spans residues 58-80 (SNVGEDGGDVGNYSEEDDDGDEE). Positions 71-80 (SEEDDDGDEE) are enriched in acidic residues.

Its subcellular location is the cytoplasm. The protein resides in the nucleus. Involved in the regulation of anaerobiotic glycerol metabolism. This is Protein YIG1 (YIG1) from Saccharomyces cerevisiae (strain ATCC 204508 / S288c) (Baker's yeast).